Consider the following 1894-residue polypeptide: 1,3-beta-glucan synthase component bgs2 (1894 aa).

2 disordered regions span residues Met1–Lys53 and Gly282–Ser310. Polar residues predominate over residues Glu32–Ser51. Positions Lys286–Ser296 are enriched in basic residues. 16 consecutive transmembrane segments (helical) span residues Val530–Ile550, Phe566–Phe586, Val600–Leu620, Val655–Leu675, Ile710–Trp730, Tyr731–Trp751, Ile1338–Tyr1358, Cys1394–Leu1414, Leu1476–Phe1498, Val1503–Phe1525, Phe1598–Ile1618, Ile1637–Gly1657, Phe1673–Phe1693, Trp1697–Ile1717, Asp1778–Ile1798, and Thr1837–Ala1857.

The protein belongs to the glycosyltransferase 48 family. Component of the 1,3-beta-glucan synthase (GS) complex, composed of at least the alternate catalytic subunits bgs1, bgs2, bgs3, and bgs4, and a regulatory subunit chr4.

It is found in the prospore membrane. It catalyses the reaction [(1-&gt;3)-beta-D-glucosyl](n) + UDP-alpha-D-glucose = [(1-&gt;3)-beta-D-glucosyl](n+1) + UDP + H(+). Its function is as follows. Alternate catalytic subunit of the 1,3-beta-glucan synthase (GS) complex. Synthesizes 1,3-beta-glucan, a major structural component of the yeast cell wall. Has a role in ascospore development where it is required for the assembly of a functional spore wall. In Schizosaccharomyces pombe (strain 972 / ATCC 24843) (Fission yeast), this protein is 1,3-beta-glucan synthase component bgs2.